The chain runs to 324 residues: MSSNNPTPNLEQLMLEARQLMKDLGLPDKMQGDTPIFVLLVMLDMKPAKSWSEANNQKWGITPLMNKMRELGFKNLAPNTRENIRDDCVGQLVDAELATENPDKPRPKNSPKYCYQINQEVLYLVKKIGSADYPIALNNFLSNYQTIKHKYQAKRQSQRLNVKIAHNFSVSIAPGGQGVLIKSVLQDFCKYFNIDKVLYIDNTVDTARGYSPFIDENLINYLGIDIDKFKNSYDKPDIVLYKSDNKYLIIIEAVKTGGAINVERRDRLLSLFENVDVKLSFVNAFESFKELKRLTKEITRETHAWIMEFPDHMIHFNGDQYLFH.

Belongs to the BsuBI/PstI type II restriction endonuclease family. It depends on Mg(2+) as a cofactor.

It carries out the reaction Endonucleolytic cleavage of DNA to give specific double-stranded fragments with terminal 5'-phosphates.. Activated by K(+) and Na(+) ions, whereas NH(4)(+) ions appear to inhibit endonuclease activity. In terms of biological role, a P subtype restriction enzyme that recognizes the double-stranded sequence 5'-CTGCAG-3' and cleaves after A-5. This is Type II restriction enzyme AplI (aplIR) from Arthrospira platensis (strain NIES-39 / UTEX 3086 / IAM M-135) (Spirulina platensis).